We begin with the raw amino-acid sequence, 124 residues long: Large ribosomal subunit protein eL31 (124 aa).

This sequence belongs to the eukaryotic ribosomal protein eL31 family. Component of the large ribosomal subunit.

It localises to the cytoplasm. Functionally, component of the large ribosomal subunit. The ribosome is a large ribonucleoprotein complex responsible for the synthesis of proteins in the cell. The protein is Large ribosomal subunit protein eL31 (rpl31) of Paralichthys olivaceus (Bastard halibut).